We begin with the raw amino-acid sequence, 99 residues long: Small ribosomal subunit protein eS24 (99 aa).

This sequence belongs to the eukaryotic ribosomal protein eS24 family.

The sequence is that of Small ribosomal subunit protein eS24 from Methanothrix thermoacetophila (strain DSM 6194 / JCM 14653 / NBRC 101360 / PT) (Methanosaeta thermophila).